The sequence spans 748 residues: Acetyl-CoA decarbonylase/synthase complex subunit beta 1 (748 aa).

[Ni-Fe-S] cluster contacts are provided by cysteine 480, cysteine 483, cysteine 569, and cysteine 571.

It belongs to the CdhC family. In terms of assembly, monomer. The ACDS complex is made up of alpha, epsilon, beta, gamma and delta chains with a probable stoichiometry of (alpha(2)epsilon(2))(4)-beta(8)-(gamma(1)delta(1))(8) (Potential). It depends on [Ni-Fe-S] cluster as a cofactor.

The catalysed reaction is Co(I)-[corrinoid Fe-S protein] + acetyl-CoA + H(+) = methyl-Co(III)-[corrinoid Fe-S protein] + CO + CoA. Its function is as follows. Part of a complex that catalyzes the reversible cleavage of acetyl-CoA, allowing autotrophic growth from CO(2). The alpha-epsilon complex generates CO from CO(2), while the beta subunit (this protein) combines the CO with CoA and a methyl group to form acetyl-CoA. The methyl group, which is incorporated into acetyl-CoA, is transferred to the beta subunit by a corrinoid iron-sulfur protein (the gamma-delta complex). The chain is Acetyl-CoA decarbonylase/synthase complex subunit beta 1 (cdhC1) from Methanocaldococcus jannaschii (strain ATCC 43067 / DSM 2661 / JAL-1 / JCM 10045 / NBRC 100440) (Methanococcus jannaschii).